The chain runs to 546 residues: 5'-nucleotidase domain-containing protein 3 (546 aa).

The active-site Nucleophile is the aspartate 100. Residues aspartate 100 and aspartate 102 each contribute to the Mg(2+) site. Catalysis depends on aspartate 102, which acts as the Proton donor. Residue 249-257 (KDSIRDVHI) participates in substrate binding. Aspartate 387 serves as a coordination point for Mg(2+).

This sequence belongs to the 5'(3')-deoxyribonucleotidase family. It depends on Mg(2+) as a cofactor.

This chain is 5'-nucleotidase domain-containing protein 3 (Nt5dc3), found in Mus musculus (Mouse).